We begin with the raw amino-acid sequence, 539 residues long: MQINGITPQALTAYGIHDVRDIVYNPSYELLFEEERSPTLQGYERGIETQLGAVAVDTGIFTGRSPKDKYIVRDDVTRDTVWWSDQGKGKNDNHPLSQETWTHLKQLVTTQLSGKRLFIIDAFCGANPDSRLSVRFVTEVAWQAHFVKNMFIRPSDEELEGFEPDFIVMNGAKCTNPNWQEQGLNSENFVAFNLTERIQLIGGTWYGGEMKKGMFSIMNYLLPLKGIASMHCSANVGEKGDVAVFFGLSGTGKTTLSTDPKRQLIGDDEHGWDDDGVFNFEGGCYAKTIKLSKEAEPDIYGAIKRDALLENVTVLADGTVDFNDGSKTENTRVSYPIYHIQNIVKPVSKAGHATKVIFLTADAFGVLPPVSRLTSDQTQYHFLSGFTAKLAGTERGVTEPTPTFSACFGAAFLMLHPTQYAEVLVKRMKAAGAQAYLVNTGWNGSGKRISIKDTRGIIDAILNGSIDDAEMQTLPVFDLAIPTSLPGVNPDILDPRDTYASVEQWQEKADDLAQRFITNFDKYTDAPAGAALVKAGPKR.

Residues Arg-64, Tyr-206, and Lys-212 each coordinate substrate. ATP contacts are provided by residues Lys-212, His-231, and 247-255; that span reads GLSGTGKTT. The Mn(2+) site is built by Lys-212 and His-231. Position 268 (Asp-268) interacts with Mn(2+). ATP-binding positions include Glu-296, Arg-332, 448–449, and Thr-454; that span reads RI. Arg-332 serves as a coordination point for substrate.

The protein belongs to the phosphoenolpyruvate carboxykinase (ATP) family. Monomer. The cofactor is Mn(2+).

It is found in the cytoplasm. The catalysed reaction is oxaloacetate + ATP = phosphoenolpyruvate + ADP + CO2. Its pathway is carbohydrate biosynthesis; gluconeogenesis. Functionally, involved in the gluconeogenesis. Catalyzes the conversion of oxaloacetate (OAA) to phosphoenolpyruvate (PEP) through direct phosphoryl transfer between the nucleoside triphosphate and OAA. This Pectobacterium carotovorum subsp. carotovorum (strain PC1) protein is Phosphoenolpyruvate carboxykinase (ATP).